We begin with the raw amino-acid sequence, 534 residues long: Glycerol kinase 5 (534 aa).

ATP-binding residues include Ser-33 and Thr-34. 3 residues coordinate glycerol: Arg-103, Asp-280, and Gln-281. Residues Thr-302, Gly-345, and Gly-445 each contribute to the ATP site.

It belongs to the FGGY kinase family. Expressed predominantly in sebaceous glands.

Its subcellular location is the cytoplasm. The enzyme catalyses glycerol + ATP = sn-glycerol 3-phosphate + ADP + H(+). It functions in the pathway polyol metabolism; glycerol degradation via glycerol kinase pathway; sn-glycerol 3-phosphate from glycerol: step 1/1. Functionally, skin-specific kinase that plays a key role in glycerol metabolism, catalyzing its phosphorylation to produce sn-glycerol 3-phosphate. Involved in skin-specific regulation of sterol regulatory element-binding protein (SREBP) processing and lipid biosynthesis. The polypeptide is Glycerol kinase 5 (Gk5) (Mus musculus (Mouse)).